We begin with the raw amino-acid sequence, 343 residues long: Undecaprenyl-diphosphatase 2 (343 aa).

Transmembrane regions (helical) follow at residues 21 to 41, 57 to 77, 104 to 124, and 129 to 149; these read LFPV…GGSW, PYLT…LVFF, LAWL…ALEH, and LFAK…ILLA. The segment covering 179–193 has biased composition (low complexity); that stretch reads VPAPATVPTQTTSAP. The disordered stretch occupies residues 179–202; sequence VPAPATVPTQTTSAPGGRATARHT. The next 4 helical transmembrane spans lie at 225-245, 265-285, 294-314, and 322-342; these read AGVI…RSGI, FLLA…ALAG, QVIL…RFLV, and LTPF…RFAI.

Belongs to the UppP family.

It localises to the cell membrane. It catalyses the reaction di-trans,octa-cis-undecaprenyl diphosphate + H2O = di-trans,octa-cis-undecaprenyl phosphate + phosphate + H(+). Catalyzes the dephosphorylation of undecaprenyl diphosphate (UPP). Confers resistance to bacitracin. This chain is Undecaprenyl-diphosphatase 2, found in Frankia alni (strain DSM 45986 / CECT 9034 / ACN14a).